The primary structure comprises 340 residues: Dihydroorotate dehydrogenase (quinone) (340 aa).

Residues 65 to 69 (AGADK) and T89 contribute to the FMN site. K69 serves as a coordination point for substrate. 114 to 118 (NRNGF) is a substrate binding site. FMN is bound by residues N142 and N175. N175 contacts substrate. The active-site Nucleophile is S178. Substrate is bound at residue N180. FMN-binding residues include K220 and T248. 249–250 (NT) contacts substrate. FMN contacts are provided by residues G271, G300, and 321-322 (YS).

Belongs to the dihydroorotate dehydrogenase family. Type 2 subfamily. As to quaternary structure, monomer. FMN serves as cofactor.

It is found in the cell membrane. The enzyme catalyses (S)-dihydroorotate + a quinone = orotate + a quinol. Its pathway is pyrimidine metabolism; UMP biosynthesis via de novo pathway; orotate from (S)-dihydroorotate (quinone route): step 1/1. Catalyzes the conversion of dihydroorotate to orotate with quinone as electron acceptor. This chain is Dihydroorotate dehydrogenase (quinone), found in Actinobacillus succinogenes (strain ATCC 55618 / DSM 22257 / CCUG 43843 / 130Z).